The sequence spans 1185 residues: MKKFNFRKVLDGLTASSPGSGSSSGSNSGGAGSGSVHPGGTAGLPREEIQESLTSDYFQICKTVRHGFPYQPTALAFDPVQKILAIGTRTGAIRILGRPGVDCYCQHESGAAVLQLQFLINEGALVSASSDDTLHLWNLRQKRPAILHSLKFNRERITYCHLPFQSKWLYVGTERGNTHIVNIESFILSGYVIMWNKAIELSTKTHPGPVVHLSDSPRDEGKLLIGYENGTVVFWDLKSKRAELRVYYDEAIHSIDWHHEGKQFMCSHSDGSLTLWNLKSPSRPFQTTVPHGKSQREGRKSESCKPILKVEYKTCRNSEPFIIFSGGLSYDKACRRPSLTIMHGKAITVLEMDHPIVEFLTLCETPYPNEFQEPYAVAVLLEKDLIVVDLTQTNFPIFENPYPMDIHESPVTCTAYFADCPPDLILVLYSIGVKHKKQGYSNKEWPVSGGAWNLGAQTYPEIIITGHADGTIKFWDASAMTLQMLYKLKTSKVFEKQKAGEGKQTCELVEEDPFAVQMIYWCPESRIFCVSGVSAYVIIYKFSRHEVTTEIVSLEVRLQCDVEDIITPEPETSPPFPDLSSQLPPSRSLSGSTNTVSSEGVTKDSIPCLSVKTRPVRMPPGYQADLVIQLVWVDGEPPQQITSLSISSAYGIVAFGNCTGLVVVDFIQKTVLLSMGTIDLYRSSDLYQRQPRSPRKNRQFIADNFCMRGLSNFYPDLTKRIRTSYQSLTELNDSPVPLELERCKSPTSDHVNGHCTSPTSQSCSSGKRLSSADVSKVNRWGPGRPPFRKAQSAACMEISLPVTTEETRENSYNRSRSSSISSIDKDSKEAITALYFMESFARKNDSTVSPCLFVGTSLGMVVLISLNLPSSDEQRFTEPVVVLPSGTFLSLKGAVLTFSCMDRTGSLMQPPYEVWRDPNNTDENEKTWKRKLVMNYSSSSQEMGDHQYTIICSEKQAKVFSLPSQTCLYVHNITETSFILQADVVVMCNSACLACFCANGHIMIMSLPSLRPMLDVNYLPLTDMRIARTFCFTNEGQALYLVSPTEIQRLTYSQEMCDNIQDMLGDLFTPIETPEAQNRGFLKGLFGGSGQTFDREELFGEASAGKASRSLAQHIPGPGSIEGMKGAAGGVMGELTRARIALDERGQRLGELEEKTAGMMTSAEAFSKHAHELMLKYKDKKWYQF.

The residue at position 1 (Met-1) is an N-acetylmethionine. The interval 15-44 (ASSPGSGSSSGSNSGGAGSGSVHPGGTAGL) is disordered. Residues 16–26 (SSPGSGSSSGS) are compositionally biased toward low complexity. 10 WD repeats span residues 73 to 106 (TALA…CYCQ), 113 to 152 (VLQL…SLKF), 157 to 193 (ITYC…GYVI), 212 to 246 (HLSD…ELRV), 252 to 284 (IHSI…PSRP), 306 to 348 (PILK…KAIT), 356 to 390 (IVEF…VVDL), 412 to 489 (TCTA…YKLK), 517 to 628 (QMIY…DLVI), and 642 to 704 (TSLS…IADN). Thr-567 is modified (phosphothreonine). The tract at residues 567–601 (TPEPETSPPFPDLSSQLPPSRSLSGSTNTVSSEGV) is disordered. Residues Ser-573, Ser-588, and Ser-592 each carry the phosphoserine modification. Over residues 578–592 (DLSSQLPPSRSLSGS) the composition is skewed to low complexity. Thr-595 bears the Phosphothreonine mark. A Phosphoserine modification is found at Ser-598. Arg-708 carries the post-translational modification Omega-N-methylarginine. Residues 747-768 (TSDHVNGHCTSPTSQSCSSGKR) are compositionally biased toward polar residues. Residues 747-770 (TSDHVNGHCTSPTSQSCSSGKRLS) form a disordered region. Residues Ser-762, Ser-764, Ser-765, Ser-770, Ser-771, Ser-792, Ser-799, Ser-811, Ser-819, Ser-821, and Ser-822 each carry the phosphoserine modification. 4 WD repeats span residues 831 to 888 (ITAL…SGTF), 897 to 968 (TFSC…QTCL), 973 to 1017 (ITET…LDVN), and 1031 to 1054 (CFTN…TYSQ). Thr-1092 carries the post-translational modification Phosphothreonine. A v-SNARE coiled-coil homology domain is found at 1120-1180 (SIEGMKGAAG…HELMLKYKDK (61 aa)).

It belongs to the WD repeat L(2)GL family. Interacts with STX1A and STX4. Phosphorylated, leading to STXBP5L increased turnover and subsequent de-repression of insulin secretion. Phosphorylated on serine residues in response to glucose or phorbol esters. Post-translationally, ubiquitinated by the E3 ligase SYVN1, leading to STXBP5L proteasomal degradation. In terms of tissue distribution, detected in hippocampus and cerebellum. Expressed in pancreatic beta-cells where it modulates insulin secretion.

Its subcellular location is the cytoplasm. It localises to the cell membrane. The protein resides in the membrane. In terms of biological role, plays a role in vesicle trafficking and exocytosis inhibition. In pancreatic beta-cells, inhibits insulin secretion probably by interacting with and regulating STX1A and STX4, key t-SNARE proteins involved in the fusion of insulin granules to the plasma membrane. Also plays a role in neurotransmitter release by inhibiting basal acetylcholine release from axon terminals and by preventing synaptic fatigue upon repetitive stimulation. Promotes as well axonal outgrowth. The polypeptide is Syntaxin-binding protein 5-like (Stxbp5l) (Mus musculus (Mouse)).